We begin with the raw amino-acid sequence, 508 residues long: GMP synthase [glutamine-hydrolyzing] (508 aa).

Residues 1 to 189 enclose the Glutamine amidotransferase type-1 domain; sequence MILVLDFGSQ…ALLVCGCEKT (189 aa). Cysteine 78 (nucleophile) is an active-site residue. Catalysis depends on residues histidine 163 and glutamate 165. One can recognise a GMPS ATP-PPase domain in the interval 190–383; that stretch reads WGMQHFAQRE…LGVSQDFLMR (194 aa). 217–223 is a binding site for ATP; sequence SGGVDST.

As to quaternary structure, homodimer.

It catalyses the reaction XMP + L-glutamine + ATP + H2O = GMP + L-glutamate + AMP + diphosphate + 2 H(+). It participates in purine metabolism; GMP biosynthesis; GMP from XMP (L-Gln route): step 1/1. Catalyzes the synthesis of GMP from XMP. The protein is GMP synthase [glutamine-hydrolyzing] (guaA) of Helicobacter pylori (strain ATCC 700392 / 26695) (Campylobacter pylori).